Consider the following 153-residue polypeptide: Ribonuclease K6 (153 aa).

The N-terminal stretch at 1–27 (MVVDLPRYLPLLLLLELWEPMYLLCSQ) is a signal peptide. The Proton acceptor role is filled by H41. 4 disulfides stabilise this stretch: C49/C107, C63/C117, C81/C132, and C88/C95. N58 carries N-linked (GlcNAc...) asparagine glycosylation. 64–68 (KQINT) is a binding site for substrate. N-linked (GlcNAc...) asparagine glycosylation occurs at N85. Position 89 (K89) interacts with substrate. H148 acts as the Proton donor in catalysis.

Belongs to the pancreatic ribonuclease family. In terms of assembly, interacts (via N-terminus) with bacterial lipopolysaccharide (LPS). In terms of tissue distribution, highly expressed in spleen (at protein level). Has little or no expression in healthy kidneys (at protein level). Detected at high levels in infected kidneys (at protein level). Expressed at low levels in bladder. Also detected in skeletal muscle, heart and bone marrow.

The protein resides in the secreted. Its subcellular location is the lysosome. It is found in the cytoplasmic granule. Functionally, ribonuclease which shows a preference for the pyrimidines uridine and cytosine. Has potent antibacterial activity against a range of Gram-positive and Gram-negative bacteria, including P.aeruginosa, A.baumanii, M.luteus, S.aureus, E.faecalis, E.faecium, S.saprophyticus and E.coli. Causes loss of bacterial membrane integrity, and also promotes agglutination of Gram-negative bacteria. Probably contributes to urinary tract sterility. Bactericidal activity is independent of RNase activity. This chain is Ribonuclease K6 (Rnase6), found in Mus musculus (Mouse).